A 77-amino-acid polypeptide reads, in one-letter code: Acyl carrier protein (77 aa).

In terms of domain architecture, Carrier spans 1-76 (MENFDKVKDI…DAVKFINSLE (76 aa)). Serine 36 bears the O-(pantetheine 4'-phosphoryl)serine mark.

The protein belongs to the acyl carrier protein (ACP) family. 4'-phosphopantetheine is transferred from CoA to a specific serine of apo-ACP by AcpS. This modification is essential for activity because fatty acids are bound in thioester linkage to the sulfhydryl of the prosthetic group.

Its subcellular location is the cytoplasm. It functions in the pathway lipid metabolism; fatty acid biosynthesis. In terms of biological role, carrier of the growing fatty acid chain in fatty acid biosynthesis. This is Acyl carrier protein from Staphylococcus aureus (strain Mu3 / ATCC 700698).